Here is a 1362-residue protein sequence, read N- to C-terminus: DNA-directed RNA polymerase subunit beta'' (1362 aa).

Cys-224, Cys-295, Cys-302, and Cys-305 together coordinate Zn(2+).

This sequence belongs to the RNA polymerase beta' chain family. RpoC2 subfamily. In terms of assembly, in plastids the minimal PEP RNA polymerase catalytic core is composed of four subunits: alpha, beta, beta', and beta''. When a (nuclear-encoded) sigma factor is associated with the core the holoenzyme is formed, which can initiate transcription. The cofactor is Zn(2+).

The protein localises to the plastid. Its subcellular location is the chloroplast. It carries out the reaction RNA(n) + a ribonucleoside 5'-triphosphate = RNA(n+1) + diphosphate. In terms of biological role, DNA-dependent RNA polymerase catalyzes the transcription of DNA into RNA using the four ribonucleoside triphosphates as substrates. The protein is DNA-directed RNA polymerase subunit beta'' of Helianthus annuus (Common sunflower).